Reading from the N-terminus, the 471-residue chain is GDP-mannose transporter (471 aa).

A compositionally biased stretch (polar residues) spans 1 to 13 (MSSGSRSFFTPQE). The segment at 1–52 (MSSGSRSFFTPQETRLELPQGAAHQTPDITRPASPSENDRAPFLNGGPSDAR) is disordered. Over 1–70 (MSSGSRSFFT…ALRNDSEKPA (70 aa)) the chain is Cytoplasmic. A helical membrane pass occupies residues 71 to 91 (VGIMALAPILCYCAASITMTV). The Lumenal segment spans residues 92 to 101 (VNKFTVSGRG). Residues 102–122 (FNMNLLVLLIQSTVGVTCVWI) form a helical membrane-spanning segment. The Cytoplasmic portion of the chain corresponds to 123–139 (AERAGLIQLRGLNAKDA). The helical transmembrane segment at 140–160 (WNWMPLSIMLVFVIWTGSKAL) threads the bilayer. Topologically, residues 161 to 166 (QYLNIS) are lumenal. N-linked (GlcNAc...) asparagine glycosylation is present at N164. A helical transmembrane segment spans residues 167 to 187 (VYTIFKNLTIILIAYGEVMWF). Residues 188-193 (GGRVTR) are Cytoplasmic-facing. The helical transmembrane segment at 194 to 214 (IVLCSFLFMVLSSVIAAWSDI) threads the bilayer. The Lumenal segment spans residues 215-279 (SNVFAIGNLS…DVIEGFQGYG (65 aa)). N222 carries an N-linked (GlcNAc...) asparagine glycan. The chain crosses the membrane as a helical span at residues 280 to 300 (LLSSGYVWMALNCICSATYVL). Residues 301–315 (LMRKRIKVTGFKDWD) are Cytoplasmic-facing. A helical membrane pass occupies residues 316-336 (TMFYNNFLSIPVLLLMSFLVE). Residues 337-354 (DWSYANLHKNFPDDKQTK) lie on the Lumenal side of the membrane. A helical membrane pass occupies residues 355–375 (LISAIVFSGACAILISYTTAW). Topologically, residues 376 to 383 (CIRATSST) are cytoplasmic. Residues 384-404 (TYSMVGALNKLPVALSGMVFF) form a helical membrane-spanning segment. Residues 405-408 (HDPP) are Lumenal-facing. The chain crosses the membrane as a helical span at residues 409-429 (VTFSSVSAIAVGFFAGLVYAF). At 430 to 471 (GKNKQAEAAKLGGHASANGSSSMSGSKDGSSLPMHTFNDRKD) the chain is on the cytoplasmic side. A compositionally biased stretch (low complexity) spans 442–460 (GHASANGSSSMSGSKDGSS). The interval 442-471 (GHASANGSSSMSGSKDGSSLPMHTFNDRKD) is disordered.

This sequence belongs to the TPT transporter family. SLC35D subfamily. As to quaternary structure, homooligomer.

The protein localises to the golgi apparatus membrane. It localises to the cytoplasmic vesicle membrane. Its subcellular location is the endoplasmic reticulum membrane. Involved in the import of GDP-mannose from the cytoplasm into the Golgi lumen. The sequence is that of GDP-mannose transporter (VRG4) from Mycosarcoma maydis (Corn smut fungus).